We begin with the raw amino-acid sequence, 178 residues long: Large ribosomal subunit protein uL30 (178 aa).

This sequence belongs to the universal ribosomal protein uL30 family. Part of the 50S ribosomal subunit.

This Pyrobaculum aerophilum (strain ATCC 51768 / DSM 7523 / JCM 9630 / CIP 104966 / NBRC 100827 / IM2) protein is Large ribosomal subunit protein uL30.